The following is a 518-amino-acid chain: Macrophage receptor MARCO (518 aa).

Topologically, residues 1 to 48 (MGSKELLKEEDFLGSTEDRADFDQAMFPVMETFEINDPVPKKRNGGTF) are cytoplasmic. Residues 49 to 69 (CMAVMAIHLILLTAGTALLLI) form a helical; Signal-anchor for type II membrane protein membrane-spanning segment. The Extracellular segment spans residues 70-518 (QVLNLQEQLQ…HNEDAGVECS (449 aa)). Residues asparagine 87 and asparagine 138 are each glycosylated (N-linked (GlcNAc...) asparagine). A disordered region spans residues 147 to 426 (QIKGERGSPG…GESFQRVRIM (280 aa)). The Collagen-like domain occupies 149–418 (KGERGSPGPK…QKGEKGQKGE (270 aa)). Over residues 154 to 163 (SPGPKGAPGA) the composition is skewed to low complexity. A compositionally biased stretch (basic and acidic residues) spans 239-250 (KGEHGTKGDKGD). 2 stretches are compositionally biased toward low complexity: residues 293–314 (PGVKGDQGKPGVQGVPGPQGAP) and 325–344 (RTGLPGPAGPPGIAGNPGIA). The span at 410–421 (KGEKGQKGESFQ) shows a compositional bias: basic and acidic residues. In terms of domain architecture, SRCR spans 423 to 518 (VRIMGGTNRG…HNEDAGVECS (96 aa)). 3 cysteine pairs are disulfide-bonded: cysteine 446–cysteine 507, cysteine 459–cysteine 517, and cysteine 487–cysteine 497.

In terms of assembly, homotrimer; disulfide-linked. Trimers may assemble in larger oligomers thus resulting in the creation of a large surface capable of interacting with very large ligands. In terms of processing, N-glycosylated. Expressed in subpopulations of macrophages in the spleen and the medullary cord of lymph nodes (at protein level).

It localises to the cell membrane. Functionally, pattern recognition receptor (PRR) which binds Gram-positive and Gram-negative bacteria. Also plays a role in binding of unopsonized particles by alveolar macrophages. Binds to the secretoglobin SCGB3A2. The protein is Macrophage receptor MARCO (Marco) of Mus musculus (Mouse).